A 246-amino-acid chain; its full sequence is Pyridoxine 5'-phosphate synthase (246 aa).

Residue N7 participates in 3-amino-2-oxopropyl phosphate binding. 9–10 (DH) is a 1-deoxy-D-xylulose 5-phosphate binding site. Position 18 (R18) interacts with 3-amino-2-oxopropyl phosphate. Catalysis depends on H43, which acts as the Proton acceptor. Residues R45 and H50 each contribute to the 1-deoxy-D-xylulose 5-phosphate site. The Proton acceptor role is filled by E70. T100 contributes to the 1-deoxy-D-xylulose 5-phosphate binding site. H190 (proton donor) is an active-site residue. Residues G191 and 212-213 (GH) each bind 3-amino-2-oxopropyl phosphate.

Belongs to the PNP synthase family. In terms of assembly, homooctamer; tetramer of dimers.

It is found in the cytoplasm. The catalysed reaction is 3-amino-2-oxopropyl phosphate + 1-deoxy-D-xylulose 5-phosphate = pyridoxine 5'-phosphate + phosphate + 2 H2O + H(+). It functions in the pathway cofactor biosynthesis; pyridoxine 5'-phosphate biosynthesis; pyridoxine 5'-phosphate from D-erythrose 4-phosphate: step 5/5. Its function is as follows. Catalyzes the complicated ring closure reaction between the two acyclic compounds 1-deoxy-D-xylulose-5-phosphate (DXP) and 3-amino-2-oxopropyl phosphate (1-amino-acetone-3-phosphate or AAP) to form pyridoxine 5'-phosphate (PNP) and inorganic phosphate. The sequence is that of Pyridoxine 5'-phosphate synthase from Bordetella petrii (strain ATCC BAA-461 / DSM 12804 / CCUG 43448).